A 380-amino-acid polypeptide reads, in one-letter code: DNA replication and repair protein RecF (380 aa).

30–37 (GENAQGKT) is an ATP binding site.

This sequence belongs to the RecF family.

Its subcellular location is the cytoplasm. In terms of biological role, the RecF protein is involved in DNA metabolism; it is required for DNA replication and normal SOS inducibility. RecF binds preferentially to single-stranded, linear DNA. It also seems to bind ATP. The chain is DNA replication and repair protein RecF from Synechococcus sp. (strain JA-3-3Ab) (Cyanobacteria bacterium Yellowstone A-Prime).